The sequence spans 515 residues: 2,3-bisphosphoglycerate-independent phosphoglycerate mutase (515 aa).

The Mn(2+) site is built by Asp14 and Ser64. Residue Ser64 is the Phosphoserine intermediate of the active site. Residues His125, 155–156 (RD), Arg187, Arg193, 263–266 (RADR), and Lys337 each bind substrate. Mn(2+) contacts are provided by Asp404, His408, Asp445, His446, and His464.

Belongs to the BPG-independent phosphoglycerate mutase family. As to quaternary structure, monomer. The cofactor is Mn(2+).

The catalysed reaction is (2R)-2-phosphoglycerate = (2R)-3-phosphoglycerate. The protein operates within carbohydrate degradation; glycolysis; pyruvate from D-glyceraldehyde 3-phosphate: step 3/5. Its function is as follows. Catalyzes the interconversion of 2-phosphoglycerate and 3-phosphoglycerate. In Yersinia pseudotuberculosis serotype O:1b (strain IP 31758), this protein is 2,3-bisphosphoglycerate-independent phosphoglycerate mutase.